Reading from the N-terminus, the 77-residue chain is Antitoxin VapB2 (77 aa).

Positions 4-46 constitute a SpoVT-AbrB domain; sequence ASVFMTNRSQAVRLPAEVRFSEEIKKLSVRVSGSDRILSPLNQ.

This sequence belongs to the VapB family. As to quaternary structure, probably forms a complex with cognate toxin VapC2.

Functionally, antitoxin component of a type II toxin-antitoxin (TA) system. Neutralizes the effect of cognate toxin VapC2 but not non-cognate toxin VapC2. This is Antitoxin VapB2 from Haemophilus influenzae (strain 86-028NP).